The following is a 68-amino-acid chain: Copper transport protein ATOX1 (68 aa).

An HMA domain is found at 1–63 (MPKHEFSVDM…TLNKTGKAVS (63 aa)). Residues C12 and C15 each contribute to the Cu cation site. S47 is subject to Phosphoserine. An N6-acetyllysine modification is found at K60.

This sequence belongs to the ATX1 family. Homodimer. Interacts with ATP7B. Interacts with ATP7A. Interacts (via dimer form) with SLC31A1 (via C-terminal domain); this interaction improves ATOX1 stability and controls intracellular Cu(I) levels.

Binds and deliver cytosolic copper to the copper ATPase proteins. May be important in cellular antioxidant defense. In Rattus norvegicus (Rat), this protein is Copper transport protein ATOX1.